The sequence spans 161 residues: MPSMDIVSEVNEVELRNAVDNSVRELKGRFDFRGKEASIEYKDHIVTLTAEDDFQCRQLVDILRMQMSKRDVDPKSMDVDEKAVHSGKTFSLKVKFKEGIETLVAKKLVKLIKDSKLKVQSSIQGDSVRVTGKKRDDLQQVMALARESELGQPFQFNNFRD.

Belongs to the YajQ family.

Nucleotide-binding protein. This chain is Nucleotide-binding protein Shal_3198, found in Shewanella halifaxensis (strain HAW-EB4).